The following is a 227-amino-acid chain: Nudix hydrolase 27, chloroplastic (227 aa).

The N-terminal 44 residues, 1–44, are a transit peptide targeting the chloroplast; the sequence is MAVKASGFIGKSAISVHLDFSSFPVKFSCLKQFSVSSPKPLVVL. One can recognise a Nudix hydrolase domain in the interval 61-208; sequence GYRKNVGICL…KRPVYEHVIK (148 aa). Residues 94-115 carry the Nudix box motif; it reads GGADEGEDLRNAAFRELREETG. Residues Glu109 and Glu113 each contribute to the Mn(2+) site.

Belongs to the Nudix hydrolase family. Requires Mg(2+) as cofactor. The cofactor is Mn(2+). As to expression, expressed in roots, leaves, stems and inflorescences.

The protein localises to the plastid. It is found in the chloroplast. Mediates the hydrolysis of some nucleoside diphosphate derivatives. Can use diadenosine 5',5'''-P(1)P(5) pentaphosphate (Ap(5)A) as substrates. The chain is Nudix hydrolase 27, chloroplastic (NUDT27) from Arabidopsis thaliana (Mouse-ear cress).